The sequence spans 424 residues: QQRYLNAKRYVKLAIVADRSMVTKHNGKLKKLRKWIYRIVNTINEVYRSLNILVALVYLEIWSKEDLINVTSAAKDTLASFGNWRATDLLKRRSHDAAHLLTNIKFDGTTVGKAYVASMCQQDSSVGINQDHSKINLLVALTMAHELGHNLGMSHDVVNTEKQCNCGTCVMAPTISDQISKLFSNCSKNDYENFLTLYKPQCILNEPSKTDIVSPPVCGNELLEVGEECDCGSPETCQNPCCDAATCKLTSGSQCAKGLCCDQCKFSKSGTECRAAKDDCDIAESCTGQSADCPTDDLQRNGQPCGNNAQYCRKGKCPIMTNQCISFYGPNAAVAPDACFDYNLKGEGNFYCRKEQATIFPCAQKDKKCGRLFCVLGPTGKRISCEHTYSQDDPDIGMVLPGTKCADGKVCNSNRECVDVNTAY.

Gln1 carries the post-translational modification Pyrrolidone carboxylic acid. Positions 9–207 constitute a Peptidase M12B domain; the sequence is RYVKLAIVAD…YKPQCILNEP (199 aa). N-linked (GlcNAc...) asparagine glycosylation is present at Asn69. Asp96 lines the Ca(2+) pocket. 3 disulfides stabilise this stretch: Cys120–Cys202, Cys164–Cys186, and Cys166–Cys169. His145 contributes to the Zn(2+) binding site. Residue Glu146 is part of the active site. Zn(2+) contacts are provided by His149 and His155. The N-linked (GlcNAc...) asparagine glycan is linked to Asn185. The Ca(2+) site is built by Cys202, Asn205, Val217, Asn220, Leu222, Glu224, Glu227, and Asp230. A Disintegrin domain is found at 215-301; it reads PPVCGNELLE…DCPTDDLQRN (87 aa). 14 cysteine pairs are disulfide-bonded: Cys218–Cys247, Cys229–Cys242, Cys231–Cys237, Cys241–Cys264, Cys255–Cys261, Cys260–Cys286, Cys273–Cys293, Cys280–Cys312, Cys305–Cys317, Cys324–Cys374, Cys339–Cys385, Cys352–Cys362, Cys369–Cys411, and Cys405–Cys417. The D/ECD-tripeptide signature appears at 279 to 281; that stretch reads DCD. Ca(2+) is bound by residues Asp281, Glu284, and Asp296.

This sequence belongs to the venom metalloproteinase (M12B) family. P-III subfamily. P-IIIa sub-subfamily. Monomer. It depends on Zn(2+) as a cofactor. Glycosylated. As to expression, expressed by the venom gland.

It localises to the secreted. Its activity is regulated as follows. Its proteolytic activity is inhibited by EDTA, TPEN, 1,10-phenanthroline, and some thiol compounds, but is enhanced by alkaline earth metal ions (Mg2+, Ca2+, Sr2+, and Ba2+). Its activity is not modulated by urea (4 M). Non-hemorrhagic metalloproteinase that degrades fibrinogen. The alpha chain (FGA) is rapidly degraded, the beta chain (FGB) is degraded very slowly, while the gamma chain is left intact. Shows a prefential cleavage at X-Leu bonds. Cleaves insulin B chain at '29-His-|-Leu-30', '33-Ser-|-His-34', '38-Ala-|-Leu-39' and '40-Tyr-|-Leu-41' bonds. This chain is Zinc metalloproteinase-disintegrin-like brevilysin H2b, found in Gloydius brevicauda (Korean slamosa snake).